An 893-amino-acid chain; its full sequence is Protein bride of sevenless (893 aa).

An N-terminal signal peptide occupies residues 1–30 (MSGLQLIWKSPTQLVLFVLLITISCIDLCH). The Extracellular portion of the chain corresponds to 32–530 (VGAATPTKKS…RIKLDTWVAT (499 aa)). Disordered regions lie at residues 36-66 (TPTK…NEGS) and 82-102 (GTAS…SSTT). A compositionally biased stretch (polar residues) spans 50–66 (QPVSSTTTAIPTTNEGS). Residues Asn183, Asn307, Asn328, Asn471, and Asn482 are each glycosylated (N-linked (GlcNAc...) asparagine). The next 8 membrane-spanning stretches (helical) occupy residues 531–551 (GLTA…FIVV), 563–583 (PVTS…FVPF), 607–627 (LCGV…SLLL), 630–650 (AVML…NGYI), 653–673 (IICV…LVVM), 692–712 (WGLL…VPFI), 722–742 (GILI…WIAL), and 752–772 (AAIP…ILIP). Residues 773-893 (RTFLIVRGIE…SPDHSKITRF (121 aa)) are Cytoplasmic-facing. The segment at 858-893 (ANINPQRPPPHPQQSPSRSSVCSLPPSPDHSKITRF) is disordered.

This sequence belongs to the G-protein coupled receptor 3 family.

The protein resides in the cell membrane. Functionally, acts as a ligand for sevenless tyrosine-kinase receptor during eye development. In Drosophila virilis (Fruit fly), this protein is Protein bride of sevenless (boss).